Consider the following 337-residue polypeptide: Heat-inducible transcription repressor HrcA (337 aa).

This sequence belongs to the HrcA family.

In terms of biological role, negative regulator of class I heat shock genes (grpE-dnaK-dnaJ and groELS operons). Prevents heat-shock induction of these operons. The chain is Heat-inducible transcription repressor HrcA from Kocuria rhizophila (strain ATCC 9341 / DSM 348 / NBRC 103217 / DC2201).